Reading from the N-terminus, the 363-residue chain is 3-dehydroquinate synthase (363 aa).

NAD(+) is bound by residues 74–79, 108–112, 132–133, K145, K154, and 172–175; these read DGEQYK, GVIGD, TT, and CLKT. Zn(2+)-binding residues include E187, H250, and H267.

Belongs to the sugar phosphate cyclases superfamily. Dehydroquinate synthase family. Requires NAD(+) as cofactor. The cofactor is Co(2+). Zn(2+) serves as cofactor.

It is found in the cytoplasm. The catalysed reaction is 7-phospho-2-dehydro-3-deoxy-D-arabino-heptonate = 3-dehydroquinate + phosphate. The protein operates within metabolic intermediate biosynthesis; chorismate biosynthesis; chorismate from D-erythrose 4-phosphate and phosphoenolpyruvate: step 2/7. Functionally, catalyzes the conversion of 3-deoxy-D-arabino-heptulosonate 7-phosphate (DAHP) to dehydroquinate (DHQ). The sequence is that of 3-dehydroquinate synthase from Buchnera aphidicola subsp. Acyrthosiphon pisum (strain APS) (Acyrthosiphon pisum symbiotic bacterium).